The following is a 153-amino-acid chain: Histone H2B.3 (153 aa).

Basic and acidic residues predominate over residues 1–28; the sequence is MAPKADKKPAAKKPAEEEPATEKAEKAP. Positions 1–60 are disordered; it reads MAPKADKKPAAKKPAEEEPATEKAEKAPAGKKPKAEKRLPAGKSAGKEGGEGKKGKKKAK. 2 positions are modified to N6-acetyllysine: Lys-7 and Lys-37. Lys-149 is covalently cross-linked (Glycyl lysine isopeptide (Lys-Gly) (interchain with G-Cter in ubiquitin)).

It belongs to the histone H2B family. As to quaternary structure, the nucleosome is a histone octamer containing two molecules each of H2A, H2B, H3 and H4 assembled in one H3-H4 heterotetramer and two H2A-H2B heterodimers. The octamer wraps approximately 147 bp of DNA. In terms of processing, can be acetylated to form H2BK6ac and H2BK33ac. Post-translationally, monoubiquitinated to form H2BK143ub1; may give a specific tag for epigenetic transcriptional activation.

The protein resides in the nucleus. The protein localises to the chromosome. Its function is as follows. Core component of nucleosome. Nucleosomes wrap and compact DNA into chromatin, limiting DNA accessibility to the cellular machineries which require DNA as a template. Histones thereby play a central role in transcription regulation, DNA repair, DNA replication and chromosomal stability. DNA accessibility is regulated via a complex set of post-translational modifications of histones, also called histone code, and nucleosome remodeling. The sequence is that of Histone H2B.3 from Zea mays (Maize).